The chain runs to 572 residues: Phosphoenolpyruvate-protein phosphotransferase (572 aa).

The active-site Tele-phosphohistidine intermediate is His-190. Phosphoenolpyruvate is bound by residues Arg-297 and Arg-333. Residues Glu-427 and Asp-451 each coordinate Mg(2+). Phosphoenolpyruvate contacts are provided by residues 450–451 (ND) and Arg-461. The Proton donor role is filled by Cys-498.

This sequence belongs to the PEP-utilizing enzyme family. In terms of assembly, homodimer. Mg(2+) is required as a cofactor.

It is found in the cytoplasm. It catalyses the reaction L-histidyl-[protein] + phosphoenolpyruvate = N(pros)-phospho-L-histidyl-[protein] + pyruvate. General (non sugar-specific) component of the phosphoenolpyruvate-dependent sugar phosphotransferase system (sugar PTS). This major carbohydrate active-transport system catalyzes the phosphorylation of incoming sugar substrates concomitantly with their translocation across the cell membrane. Enzyme I transfers the phosphoryl group from phosphoenolpyruvate (PEP) to the phosphoryl carrier protein (HPr). The sequence is that of Phosphoenolpyruvate-protein phosphotransferase (ptsI) from Mycoplasma pneumoniae (strain ATCC 29342 / M129 / Subtype 1) (Mycoplasmoides pneumoniae).